The chain runs to 131 residues: Large ribosomal subunit protein bL19 (131 aa).

This sequence belongs to the bacterial ribosomal protein bL19 family.

Functionally, this protein is located at the 30S-50S ribosomal subunit interface and may play a role in the structure and function of the aminoacyl-tRNA binding site. This Synechococcus sp. (strain CC9902) protein is Large ribosomal subunit protein bL19.